The primary structure comprises 219 residues: 7-cyano-7-deazaguanine synthase 2 (219 aa).

Residue 8-18 (YSGGMDSFTAL) participates in ATP binding. Residues Cys-185, Cys-193, Cys-196, and Cys-199 each coordinate Zn(2+).

Belongs to the QueC family. Requires Zn(2+) as cofactor.

It carries out the reaction 7-carboxy-7-deazaguanine + NH4(+) + ATP = 7-cyano-7-deazaguanine + ADP + phosphate + H2O + H(+). The protein operates within purine metabolism; 7-cyano-7-deazaguanine biosynthesis. Catalyzes the ATP-dependent conversion of 7-carboxy-7-deazaguanine (CDG) to 7-cyano-7-deazaguanine (preQ(0)). This is 7-cyano-7-deazaguanine synthase 2 from Colwellia psychrerythraea (strain 34H / ATCC BAA-681) (Vibrio psychroerythus).